A 246-amino-acid polypeptide reads, in one-letter code: Transcriptional regulatory protein LytR (246 aa).

Residues 2–116 (KALIIDDEPL…RIEQAVNKVR (115 aa)) form the Response regulatory domain. At D53 the chain carries 4-aspartylphosphate. The 105-residue stretch at 141-245 (LPVEIDDKIH…MKDFKASIGL (105 aa)) folds into the HTH LytTR-type domain.

In terms of assembly, homodimer; when phosphorylated. Post-translationally, phosphorylated and dephosphorylated by LytS.

It is found in the cytoplasm. Functionally, member of the two-component regulatory system LytR/LytS that regulates genes involved in autolysis, programmed cell death, biofilm formation and cell wall metabolism. Also participates in sensing and responding to host defense cationic antimicrobial peptides (HDPs). Upon phosphorylation by LytS, functions as a transcription regulator by direct binding to promoter regions of target genes including lrgA and lrgB, to positively regulate their expression. The protein is Transcriptional regulatory protein LytR (lytR) of Staphylococcus aureus (strain MW2).